Here is a 541-residue protein sequence, read N- to C-terminus: Glucose-6-phosphate isomerase (541 aa).

Glu-346 functions as the Proton donor in the catalytic mechanism. Catalysis depends on residues His-377 and Lys-506.

Belongs to the GPI family.

It localises to the cytoplasm. The enzyme catalyses alpha-D-glucose 6-phosphate = beta-D-fructose 6-phosphate. The protein operates within carbohydrate biosynthesis; gluconeogenesis. It participates in carbohydrate degradation; glycolysis; D-glyceraldehyde 3-phosphate and glycerone phosphate from D-glucose: step 2/4. Catalyzes the reversible isomerization of glucose-6-phosphate to fructose-6-phosphate. The protein is Glucose-6-phosphate isomerase of Rhizobium johnstonii (strain DSM 114642 / LMG 32736 / 3841) (Rhizobium leguminosarum bv. viciae).